The chain runs to 155 residues: DNA gyrase inhibitor (155 aa).

Belongs to the DNA gyrase inhibitor family. Interacts with DNA gyrase.

Its subcellular location is the cytoplasm. In terms of biological role, inhibits the supercoiling activity of DNA gyrase. Acts by inhibiting DNA gyrase at an early step, prior to (or at the step of) binding of DNA by the gyrase. It protects cells against toxins that target DNA gyrase, by inhibiting activity of these toxins and reducing the formation of lethal double-strand breaks in the cell. This Edwardsiella ictaluri (strain 93-146) protein is DNA gyrase inhibitor.